Reading from the N-terminus, the 337-residue chain is Ycf66-like protein (337 aa).

Residues 111-337 are disordered; the sequence is TEAELDQLEP…GADDQERFDY (227 aa). Residues 113–123 are compositionally biased toward acidic residues; that stretch reads AELDQLEPEDE. Composition is skewed to basic and acidic residues over residues 133-143 and 253-269; these read RGYDDDARSGR and FGDR…RPYE. Residues 304 to 316 are compositionally biased toward polar residues; it reads QSRSGNPRSQRPS.

This sequence belongs to the ycf66 family.

The protein is Ycf66-like protein of Synechocystis sp. (strain ATCC 27184 / PCC 6803 / Kazusa).